We begin with the raw amino-acid sequence, 1126 residues long: Ubiquitin carboxyl-terminal hydrolase 16/45 (1126 aa).

The span at 1 to 15 (MVKKRQADSRDHDCS) shows a compositional bias: basic and acidic residues. Residues 1-44 (MVKKRQADSRDHDCSTDSGNEDLHHRKGLGSPGQSDGATPTTAS) form a disordered region. The span at 32 to 44 (PGQSDGATPTTAS) shows a compositional bias: polar residues. The UBP-type zinc-finger motif lies at 43 to 181 (ASCQHIKKAV…ELVKKLAQKP (139 aa)). Residues C45, H47, C70, C73, C111, C114, C119, H126, H130, H139, C152, and C155 each coordinate Zn(2+). Low complexity-rich tracts occupy residues 215-229 (GGSFDDSSSRGSLAA) and 254-264 (SSGLSTSDSLT). The interval 215–264 (GGSFDDSSSRGSLAAAGGGGGVGSSRNRQVAIPMPPPEPSSGLSTSDSLT) is disordered. The active-site Nucleophile is C315. Disordered regions lie at residues 513-547 (KPQPPQRRKPSPELSLTSSSSSVTPSTGQPTINTK), 570-762 (ASLG…SGSS), and 795-833 (EQGASNGTEDADGEAKAIEQPEKTPSQAQAMAQAQARTK). A compositionally biased stretch (low complexity) spans 524–539 (PELSLTSSSSSVTPST). A compositionally biased stretch (basic residues) spans 586-598 (QRKAKRAAKKRQK). Composition is skewed to low complexity over residues 599-614 (SSLNLNGNDSGNGNEL) and 646-657 (TEDSTTSSVTTS). The span at 674 to 701 (APSTNNVPSSTASLTAPSKTYMDSNGNA) shows a compositional bias: polar residues. Positions 705–718 (GEKRDDTPEHMDKD) are enriched in basic and acidic residues. A compositionally biased stretch (low complexity) spans 730-762 (ATSPAPTATNSSTSTSATGNNNSVAGSGLSGSS). Positions 807 to 816 (GEAKAIEQPE) are enriched in basic and acidic residues. Residues 821–830 (QAQAMAQAQA) are compositionally biased toward low complexity. Residue H984 is the Proton acceptor of the active site. Residues 1037-1089 (LKVLDDSDDFSNSSSNSSTSDESQTPATPLEEQQTQQAQQPQQPQQLEEAANV) are disordered. Positions 1046-1086 (FSNSSSNSSTSDESQTPATPLEEQQTQQAQQPQQPQQLEEA) are enriched in low complexity.

It belongs to the peptidase C19 family.

It catalyses the reaction Thiol-dependent hydrolysis of ester, thioester, amide, peptide and isopeptide bonds formed by the C-terminal Gly of ubiquitin (a 76-residue protein attached to proteins as an intracellular targeting signal).. Functionally, involved in the regulation of DNA damage repair. In Drosophila melanogaster (Fruit fly), this protein is Ubiquitin carboxyl-terminal hydrolase 16/45.